The primary structure comprises 103 residues: UPF0235 protein Dole_0289 (103 aa).

The protein belongs to the UPF0235 family.

This is UPF0235 protein Dole_0289 from Desulfosudis oleivorans (strain DSM 6200 / JCM 39069 / Hxd3) (Desulfococcus oleovorans).